We begin with the raw amino-acid sequence, 266 residues long: Regulatory protein RecX (266 aa).

This sequence belongs to the RecX family.

Its subcellular location is the cytoplasm. Modulates RecA activity. The polypeptide is Regulatory protein RecX (Enterococcus faecalis (strain ATCC 700802 / V583)).